The chain runs to 303 residues: Phospholipase A1 2 (303 aa).

A disulfide bridge links Cys6 with Cys90. Ser140 acts as the Nucleophile in catalysis. The Charge relay system role is filled by Asp168. Cys179 and Cys184 are oxidised to a cystine. His232 acts as the Charge relay system in catalysis. Cystine bridges form between Cys247–Cys271, Cys248–Cys296, and Cys264–Cys269.

It belongs to the AB hydrolase superfamily. Lipase family. Expressed by the venom gland.

Its subcellular location is the secreted. The enzyme catalyses a 1,2-diacyl-sn-glycero-3-phosphocholine + H2O = a 2-acyl-sn-glycero-3-phosphocholine + a fatty acid + H(+). In terms of biological role, catalyzes the hydrolysis of phosphatidylcholine with phospholipase A1 activity. May act as an allergen and induce hemolytic activity. This Dolichovespula maculata (Bald-faced hornet) protein is Phospholipase A1 2.